Consider the following 478-residue polypeptide: Probable serine carboxypeptidase CPVL (478 aa).

Residues 1-22 form the signal peptide; it reads MVRAQWKVIILLILLMVIPSDG. 2 N-linked (GlcNAc...) asparagine glycosylation sites follow: N83 and N134. S206 is an active-site residue. 2 N-linked (GlcNAc...) asparagine glycosylation sites follow: N309 and N350. Active-site residues include D390 and H450.

This sequence belongs to the peptidase S10 family.

Functionally, may be involved in the digestion of phagocytosed particles in the lysosome, participation in an inflammatory protease cascade, and trimming of peptides for antigen presentation. This is Probable serine carboxypeptidase CPVL (CPVL) from Rattus norvegicus (Rat).